The chain runs to 142 residues: Universal stress protein C (142 aa).

It belongs to the universal stress protein A family.

Its subcellular location is the cytoplasm. In terms of biological role, required for resistance to DNA-damaging agents. This Escherichia coli O157:H7 protein is Universal stress protein C (uspC).